The following is a 41-amino-acid chain: Submaxillary gland androgen-regulated protein 2, isoform beta (41 aa).

The signal sequence occupies residues 1 to 22; it reads MKALYMVFVLWVLIGCFLRLLK.

The protein resides in the secreted. In terms of biological role, may play a role in protection or detoxification. This Mus musculus (Mouse) protein is Submaxillary gland androgen-regulated protein 2, isoform beta (Smr2).